A 126-amino-acid chain; its full sequence is Histone H2B type 1-L (126 aa).

The segment covering 1–12 (MPELAKSAPAPK) has biased composition (low complexity). The disordered stretch occupies residues 1–36 (MPELAKSAPAPKKGSKKAVTKAQKKDGKKRKRSRKE). Residue P2 is modified to N-acetylproline. Residue E3 is modified to ADP-ribosyl glutamic acid. K6 carries the post-translational modification N6-(2-hydroxyisobutyryl)lysine; alternate. N6-(beta-hydroxybutyryl)lysine; alternate is present on K6. K6 is modified (N6-acetyllysine; alternate). Position 6 is an N6-butyryllysine; alternate (K6). Position 6 is an N6-crotonyllysine; alternate (K6). K6 is subject to N6-lactoyllysine; alternate. K6 is covalently cross-linked (Glycyl lysine isopeptide (Lys-Gly) (interchain with G-Cter in SUMO2); alternate). Position 7 is an ADP-ribosylserine (S7). An N6-(beta-hydroxybutyryl)lysine; alternate modification is found at K12. 2 positions are modified to N6-acetyllysine; alternate: K12 and K13. N6-crotonyllysine; alternate occurs at positions 12 and 13. An N6-lactoyllysine; alternate modification is found at K12. K13 is modified (N6-(2-hydroxyisobutyryl)lysine; alternate). Position 15 is a phosphoserine; by STK4/MST1 (S15). Residues K16, K17, K21, and K24 each carry the N6-acetyllysine; alternate modification. N6-crotonyllysine; alternate is present on residues K16, K17, K21, and K24. An N6-lactoyllysine; alternate mark is found at K16, K17, K21, and K24. Residues K17 and K21 each carry the N6-(beta-hydroxybutyryl)lysine; alternate modification. K17 bears the N6-glutaryllysine; alternate mark. K21 and K24 each carry N6-(2-hydroxyisobutyryl)lysine; alternate. K21 is subject to N6-butyryllysine; alternate. K21 is covalently cross-linked (Glycyl lysine isopeptide (Lys-Gly) (interchain with G-Cter in SUMO2); alternate). K25 is modified (N6-(2-hydroxyisobutyryl)lysine). At K35 the chain carries N6-(2-hydroxyisobutyryl)lysine; alternate. K35 is modified (N6-(beta-hydroxybutyryl)lysine; alternate). Residue K35 is modified to N6-crotonyllysine; alternate. N6-glutaryllysine; alternate is present on K35. An N6-succinyllysine; alternate modification is found at K35. A Glycyl lysine isopeptide (Lys-Gly) (interchain with G-Cter in ubiquitin); alternate cross-link involves residue K35. A PolyADP-ribosyl glutamic acid modification is found at E36. A Phosphoserine; by AMPK modification is found at S37. An N6-(2-hydroxyisobutyryl)lysine; alternate mark is found at K44, K47, and K58. Position 44 is an N6-lactoyllysine; alternate (K44). N6-glutaryllysine; alternate occurs at positions 44 and 47. Position 47 is an N6-methyllysine; alternate (K47). K58 is subject to N6,N6-dimethyllysine; alternate. R80 bears the Dimethylated arginine mark. K86 is subject to N6-(2-hydroxyisobutyryl)lysine; alternate. K86 bears the N6-(beta-hydroxybutyryl)lysine; alternate mark. N6-acetyllysine; alternate is present on K86. K86 is subject to N6-lactoyllysine; alternate. K86 is modified (N6,N6,N6-trimethyllysine; alternate). Residues R87 and R93 each carry the omega-N-methylarginine modification. Position 109 is an N6-(2-hydroxyisobutyryl)lysine; alternate (K109). K109 carries the N6-lactoyllysine; alternate modification. At K109 the chain carries N6-glutaryllysine; alternate. K109 is modified (N6-methyllysine; alternate). Residue S113 is glycosylated (O-linked (GlcNAc) serine). T116 carries the post-translational modification Phosphothreonine. 2 positions are modified to N6-(2-hydroxyisobutyryl)lysine; alternate: K117 and K121. K117 and K121 each carry N6-(beta-hydroxybutyryl)lysine; alternate. N6-lactoyllysine; alternate is present on residues K117 and K121. K117 and K121 each carry N6-glutaryllysine; alternate. Residues K117 and K121 each carry the N6-succinyllysine; alternate modification. At K117 the chain carries N6-malonyllysine; alternate. K117 is subject to N6-methylated lysine; alternate. K121 participates in a covalent cross-link: Glycyl lysine isopeptide (Lys-Gly) (interchain with G-Cter in ubiquitin); alternate.

It belongs to the histone H2B family. As to quaternary structure, the nucleosome is a histone octamer containing two molecules each of H2A, H2B, H3 and H4 assembled in one H3-H4 heterotetramer and two H2A-H2B heterodimers. The octamer wraps approximately 147 bp of DNA. In terms of processing, monoubiquitination at Lys-35 (H2BK34Ub) by the MSL1/MSL2 dimer is required for histone H3 'Lys-4' (H3K4me) and 'Lys-79' (H3K79me) methylation and transcription activation at specific gene loci, such as HOXA9 and MEIS1 loci. Similarly, monoubiquitination at Lys-121 (H2BK120Ub) by the RNF20/40 complex gives a specific tag for epigenetic transcriptional activation and is also prerequisite for histone H3 'Lys-4' and 'Lys-79' methylation. It also functions cooperatively with the FACT dimer to stimulate elongation by RNA polymerase II. H2BK120Ub also acts as a regulator of mRNA splicing: deubiquitination by USP49 is required for efficient cotranscriptional splicing of a large set of exons. Phosphorylation at Ser-37 (H2BS36ph) by AMPK in response to stress promotes transcription. Phosphorylated on Ser-15 (H2BS14ph) by STK4/MST1 during apoptosis; which facilitates apoptotic chromatin condensation. Also phosphorylated on Ser-15 in response to DNA double strand breaks (DSBs), and in correlation with somatic hypermutation and immunoglobulin class-switch recombination. Post-translationally, glcNAcylation at Ser-113 promotes monoubiquitination of Lys-121. It fluctuates in response to extracellular glucose, and associates with transcribed genes. In terms of processing, ADP-ribosylated by PARP1 or PARP2 on Ser-7 (H2BS6ADPr) in response to DNA damage. H2BS6ADPr promotes recruitment of CHD1L. Mono-ADP-ribosylated on Glu-3 (H2BE2ADPr) by PARP3 in response to single-strand breaks. Poly ADP-ribosylation on Glu-36 (H2BE35ADPr) by PARP1 regulates adipogenesis: it inhibits phosphorylation at Ser-37 (H2BS36ph), thereby blocking expression of pro-adipogenetic genes. Crotonylation (Kcr) is specifically present in male germ cells and marks testis-specific genes in post-meiotic cells, including X-linked genes that escape sex chromosome inactivation in haploid cells. Crotonylation marks active promoters and enhancers and confers resistance to transcriptional repressors. It is also associated with post-meiotically activated genes on autosomes. Post-translationally, lactylated in macrophages by EP300/P300 by using lactoyl-CoA directly derived from endogenous or exogenous lactate, leading to stimulates gene transcription.

It is found in the nucleus. The protein resides in the chromosome. Functionally, core component of nucleosome. Nucleosomes wrap and compact DNA into chromatin, limiting DNA accessibility to the cellular machineries which require DNA as a template. Histones thereby play a central role in transcription regulation, DNA repair, DNA replication and chromosomal stability. DNA accessibility is regulated via a complex set of post-translational modifications of histones, also called histone code, and nucleosome remodeling. This is Histone H2B type 1-L from Homo sapiens (Human).